Reading from the N-terminus, the 791-residue chain is Solute carrier family 26 member 9 (791 aa).

Over 1 to 70 the chain is Cytoplasmic; it reads MSQPRPRYVV…WLPKYKIKDY (70 aa). Residues 71-96 traverse the membrane as a helical segment; that stretch reads IIPDLLGGLSGGSIQVPQGMAFALLA. Residues 97–99 are Extracellular-facing; the sequence is NLP. A helical transmembrane segment spans residues 100–117; that stretch reads AVNGLYSSFFPLLTYFFL. The Cytoplasmic portion of the chain corresponds to 118–128; sequence GGVHQMVPGTF. Residues 129–142 form a helical membrane-spanning segment; that stretch reads AVISILVGNICLQL. The Extracellular portion of the chain corresponds to 143-171; sequence APESKFQVFNNATNESYVDTAAMEAERLH. Residues 172 to 190 form a helical membrane-spanning segment; the sequence is VSATLACLTAIIQMGLGFM. At 191 to 202 the chain is on the cytoplasmic side; the sequence is QFGFVAIYLSES. A helical transmembrane segment spans residues 203 to 224; the sequence is FIRGFMTAAGLQILISVLKYIF. Residues 225 to 235 lie on the Extracellular side of the membrane; sequence GLTIPSYTGPG. The helical intramembrane region spans 236–244; the sequence is SIVFTFIDI. Topologically, residues 245–254 are extracellular; the sequence is CKNLPHTNIA. The helical transmembrane segment at 255–273 threads the bilayer; the sequence is SLIFALISGAFLVLVKELN. Over 274–281 the chain is Cytoplasmic; that stretch reads ARYMHKIR. The chain crosses the membrane as a helical span at residues 282 to 297; the sequence is FPIPTEMIVVVVATAI. Residues 298 to 327 are Extracellular-facing; it reads SGGCKMPKKYHMQIVGEIQRGFPTPVSPVV. The helical transmembrane segment at 328–348 threads the bilayer; sequence SQWKDMIGTAFSLAIVSYVIN. Residues 349-366 are Cytoplasmic-facing; that stretch reads LAMGRTLANKHGYDVDSN. The chain crosses the membrane as a helical span at residues 367–382; sequence QEMIALGCSNFFGSFF. At 383 to 390 the chain is on the extracellular side; it reads KIHVICCA. A helical transmembrane segment spans residues 391-400; the sequence is LSVTLAVDGA. Topologically, residues 401-404 are cytoplasmic; sequence GGKS. A helical membrane pass occupies residues 405 to 423; that stretch reads QVASLCVSLVVMITMLVLG. At 424-428 the chain is on the extracellular side; sequence IYLYP. A helical transmembrane segment spans residues 429-450; the sequence is LPKSVLGALIAVNLKNSLKQLT. Over 451 to 464 the chain is Cytoplasmic; the sequence is DPYYLWRKSKLDCC. The helical transmembrane segment at 465-476 threads the bilayer; it reads IWVVSFLSSFFL. A topological domain (extracellular) is located at residue Ser-477. A helical transmembrane segment spans residues 478–489; that stretch reads LPYGVAVGVAFS. Over 490 to 791 the chain is Cytoplasmic; sequence VLVVVFQTQF…MFHAETLTAL (302 aa). Positions 519–737 constitute an STAS domain; it reads TYNRAQDIQG…PSIHDAVLFA (219 aa). Positions 602–650 are disordered; sequence FENAPPTDPNNNQTPANGTSVSYITFSPDSSSPAQSEPPASAEAPGEPS. Polar residues predominate over residues 610 to 626; it reads PNNNQTPANGTSVSYIT. The span at 628–650 shows a compositional bias: low complexity; it reads SPDSSSPAQSEPPASAEAPGEPS.

The protein belongs to the SLC26A/SulP transporter (TC 2.A.53) family. Homodimer. As to expression, predominantly expressed in lung at the luminal side of the bronchiolar and alveolar epithelium of lung. To a lower extent, also expressed in pancreas and prostate.

It localises to the cell membrane. It is found in the endomembrane system. It carries out the reaction chloride(in) = chloride(out). It catalyses the reaction hydrogencarbonate(in) + chloride(out) = hydrogencarbonate(out) + chloride(in). With respect to regulation, inhibited by ammonium and thiosulfate. Functionally, ion transporter that can act both as an ion channel and anion exchanger. Mainly acts as a chloride channel, which mediate uncoupled chloride anion transport in an alternate-access mechanism where a saturable binding site is alternately exposed to either one or the other side of the membrane. Also acts as a DIDS- and thiosulfate- sensitive anion exchanger the exchange of chloride for bicarbonate ions across the cell membrane. This chain is Solute carrier family 26 member 9, found in Homo sapiens (Human).